The chain runs to 201 residues: Prostamide/prostaglandin F synthase (201 aa).

Residue Y108 is modified to Phosphotyrosine.

This sequence belongs to the peroxiredoxin-like PRXL2 family. Prostamide/prostaglandin F synthase subfamily.

The protein resides in the cytoplasm. It localises to the cytosol. It catalyses the reaction prostaglandin H2 + [thioredoxin]-dithiol = prostaglandin F2alpha + [thioredoxin]-disulfide. The enzyme catalyses prostamide F2alpha + [thioredoxin]-disulfide = prostamide H2 + [thioredoxin]-dithiol. Functionally, catalyzes the reduction of prostaglandin-ethanolamide H(2) (prostamide H(2)) to prostamide F(2alpha) with NADPH as proton donor. Also able to reduce prostaglandin H(2) to prostaglandin F(2alpha). In Bos taurus (Bovine), this protein is Prostamide/prostaglandin F synthase (PRXL2B).